Here is a 422-residue protein sequence, read N- to C-terminus: MGSKYPRSLRCCLPLWAFGLQVTFILLFYFLIGQDPIQADHKFMAIYQVIQDLTLVAALGFGFLSSSFRRHGWSSVAFSFFMLALGVQGTILLDYFLNWVLDWNMIKNPFSPFLSIQRATISTLPLLISAGAVLGKVNLVQLAVMVLVEAMTFGAIRVADKKVFRIEDHIIMMYGHVFGAYFGLTVAWWLSKSLPRRRHENAQTEKVQMTTSSSLFAMLGTLFLWIFWPSINSALLEGTKKKNAVFNTYYALAVSTVTATSMSALSHPKGKINMVHIHNAVLAGGVAVGAPSCLISSPWIAMVLGLTAGLISIWGAKCPQVCLSDLLLNPSGIHYTFGLPGLLGALTYYCLHIIAESRPSNLWIVTQTITDVGALSFAMAMGMVTGLLTGCLLSVKVWRAPHAVKYFDDQAFWEFPHLAVEF.

12 helical membrane passes run Leu-13–Gly-33, Phe-43–Phe-63, Val-76–Phe-96, Phe-113–Gly-135, Val-137–Ala-159, Ile-170–Leu-190, Leu-215–Leu-235, Ala-244–Ser-266, Ile-272–Ser-292, Leu-294–Trp-314, Tyr-335–Ala-355, and Val-372–Leu-392.

The protein belongs to the ammonium transporter (TC 2.A.49) family. Rh subfamily. In terms of processing, palmitoylated.

The protein resides in the cell membrane. Functionally, may be part of an oligomeric complex which is likely to have a transport or channel function in the erythrocyte membrane. This is Blood group Rh(D) polypeptide (Rhd) from Rattus norvegicus (Rat).